The primary structure comprises 453 residues: tRNA modification GTPase MnmE (453 aa).

Arginine 22, glutamate 79, and lysine 119 together coordinate (6S)-5-formyl-5,6,7,8-tetrahydrofolate. Residues 215-376 form the TrmE-type G domain; it reads GMKVVIAGRP…LRNHLKECMG (162 aa). Asparagine 225 contributes to the K(+) binding site. Residues 225 to 230, 244 to 250, 269 to 272, and 334 to 337 contribute to the GTP site; these read NAGKSS, TDIAGTT, DTAG, and NKAD. Serine 229 provides a ligand contact to Mg(2+). Threonine 244, isoleucine 246, and threonine 249 together coordinate K(+). Residue threonine 250 coordinates Mg(2+). A (6S)-5-formyl-5,6,7,8-tetrahydrofolate-binding site is contributed by lysine 453.

Belongs to the TRAFAC class TrmE-Era-EngA-EngB-Septin-like GTPase superfamily. TrmE GTPase family. As to quaternary structure, homodimer. Heterotetramer of two MnmE and two MnmG subunits. K(+) serves as cofactor.

Its subcellular location is the cytoplasm. Its function is as follows. Exhibits a very high intrinsic GTPase hydrolysis rate. Involved in the addition of a carboxymethylaminomethyl (cmnm) group at the wobble position (U34) of certain tRNAs, forming tRNA-cmnm(5)s(2)U34. This Vibrio vulnificus (strain CMCP6) protein is tRNA modification GTPase MnmE.